Consider the following 252-residue polypeptide: TLC domain-containing protein 1 (252 aa).

An N-terminal signal peptide occupies residues 1–29; that stretch reads MGPGWRAPSAALVGGSVALFGALRRAALA. Topologically, residues 30 to 47 are extracellular; it reads LPRPAAVRSRPGRVWRWR. One can recognise a TLC domain in the interval 41 to 235; sequence GRVWRWRNLL…LLRSDFFPSL (195 aa). The helical transmembrane segment at 48–68 threads the bilayer; that stretch reads NLLVSFAHSVLAGLWALFSLW. The Cytoplasmic segment spans residues 69 to 84; that stretch reads QSPELLSDIQDGYSVS. A helical transmembrane segment spans residues 85 to 105; it reads GHLLVCFSSGYFIHDSLDIIF. The Extracellular portion of the chain corresponds to 106 to 124; it reads NQQSRSSWEYLVHHAMAIS. The helical intramembrane region spans 125-145; sequence AFVSLIITGRFLVAAMLLLLV. The Extracellular portion of the chain corresponds to 146–174; sequence EVSNIFLTIRMLLKMSNVPSPALYEANKY. Residues 175–195 form a helical membrane-spanning segment; it reads VNLVMYFAFRLAPQVYLTWYF. At 196-202 the chain is on the cytoplasmic side; sequence VRYVEVQ. The chain crosses the membrane as a helical span at residues 203 to 223; that stretch reads GQGAFLMANLLLLDAMILMYF. Residues 224–252 are Extracellular-facing; it reads SRLLRSDFFPSLRKGSVGRDVDGEKFLID.

In terms of assembly, interacts with CACNA1C in vitro; however the relevance of the interaction in vivo is unclear.

Its subcellular location is the cell membrane. In terms of biological role, regulates the composition and fluidity of the plasma membrane. Inhibits the incorporation of membrane-fluidizing phospholipids containing omega-3 long-chain polyunsaturated fatty acids (LCPUFA) and thereby promotes membrane rigidity. Does not appear to have any effect on LCPUFA synthesis. This Gallus gallus (Chicken) protein is TLC domain-containing protein 1 (TLCD1).